The sequence spans 434 residues: Histidinol dehydrogenase (434 aa).

Positions 129, 191, and 214 each coordinate NAD(+). Residues serine 240, glutamine 262, and histidine 265 each coordinate substrate. Residues glutamine 262 and histidine 265 each coordinate Zn(2+). Active-site proton acceptor residues include glutamate 329 and histidine 330. 4 residues coordinate substrate: histidine 330, aspartate 363, glutamate 417, and histidine 422. Aspartate 363 is a binding site for Zn(2+). Histidine 422 is a Zn(2+) binding site.

Belongs to the histidinol dehydrogenase family. Requires Zn(2+) as cofactor.

It catalyses the reaction L-histidinol + 2 NAD(+) + H2O = L-histidine + 2 NADH + 3 H(+). The protein operates within amino-acid biosynthesis; L-histidine biosynthesis; L-histidine from 5-phospho-alpha-D-ribose 1-diphosphate: step 9/9. Its function is as follows. Catalyzes the sequential NAD-dependent oxidations of L-histidinol to L-histidinaldehyde and then to L-histidine. The sequence is that of Histidinol dehydrogenase from Colwellia psychrerythraea (strain 34H / ATCC BAA-681) (Vibrio psychroerythus).